Here is a 541-residue protein sequence, read N- to C-terminus: Chaperonin GroEL 5 (541 aa).

ATP-binding positions include 30-33 (TLGP), glycine 415, and aspartate 496.

The protein belongs to the chaperonin (HSP60) family. Forms a cylinder of 14 subunits composed of two heptameric rings stacked back-to-back. Interacts with the co-chaperonin GroES.

It localises to the cytoplasm. It carries out the reaction ATP + H2O + a folded polypeptide = ADP + phosphate + an unfolded polypeptide.. In terms of biological role, together with its co-chaperonin GroES, plays an essential role in assisting protein folding. The GroEL-GroES system forms a nano-cage that allows encapsulation of the non-native substrate proteins and provides a physical environment optimized to promote and accelerate protein folding. This chain is Chaperonin GroEL 5, found in Bradyrhizobium diazoefficiens (strain JCM 10833 / BCRC 13528 / IAM 13628 / NBRC 14792 / USDA 110).